A 413-amino-acid polypeptide reads, in one-letter code: Divalent metal cation transporter MntH (413 aa).

11 consecutive transmembrane segments (helical) span residues 19 to 39 (LALM…GNFA), 46 to 66 (ASFG…AMLI), 94 to 114 (VWFY…AEFI), 122 to 142 (LVLG…TFLI), 156 to 176 (VIGG…IFSQ), 196 to 216 (AVFL…IYLH), 241 to 261 (IAMT…AAAF), 290 to 310 (IFGL…TLAG), 329 to 349 (AVTM…TRIL), 350 to 370 (VMSQ…LLIF), and 392 to 412 (VIVA…LLGV).

This sequence belongs to the NRAMP family.

Its subcellular location is the cell inner membrane. Its function is as follows. H(+)-stimulated, divalent metal cation uptake system. This chain is Divalent metal cation transporter MntH, found in Klebsiella pneumoniae (strain 342).